Consider the following 129-residue polypeptide: Cytochrome c3 (129 aa).

A signal peptide spans 1-22 (MRKLFFCGVLALAVAFALPVVA). Residues H44, H47, C52, C55, H56, H57, C68, C73, H74, H92, C101, C104, H105, C122, C127, and H128 each coordinate heme c.

In terms of processing, binds 4 heme c groups per subunit.

The protein localises to the periplasm. In terms of biological role, participates in sulfate respiration coupled with phosphorylation by transferring electrons from the enzyme dehydrogenase to ferredoxin. This chain is Cytochrome c3, found in Nitratidesulfovibrio vulgaris (strain ATCC 29579 / DSM 644 / CCUG 34227 / NCIMB 8303 / VKM B-1760 / Hildenborough) (Desulfovibrio vulgaris).